A 606-amino-acid chain; its full sequence is UvrABC system protein C (606 aa).

A GIY-YIG domain is found at 19-97 (QSCGVYQMIG…IKSLKPPYNI (79 aa)). One can recognise a UVR domain in the interval 207–242 (EKVKKQLSSTMEKCSKEENYELAAIYRDRLKFLEQI).

It belongs to the UvrC family. As to quaternary structure, interacts with UvrB in an incision complex.

It localises to the cytoplasm. Functionally, the UvrABC repair system catalyzes the recognition and processing of DNA lesions. UvrC both incises the 5' and 3' sides of the lesion. The N-terminal half is responsible for the 3' incision and the C-terminal half is responsible for the 5' incision. The polypeptide is UvrABC system protein C (Wolbachia sp. subsp. Brugia malayi (strain TRS)).